Reading from the N-terminus, the 204-residue chain is Protein phosphatase 1 regulatory subunit 1B (204 aa).

An N-acetylmethionine modification is found at Met-1. A disordered region spans residues 1-204 (MDPKDRKKIQ…QRPSPSEPGT (204 aa)). Phosphothreonine; by PKA is present on Thr-34. Over residues 41 to 63 (LSEHSSPEEEASPHQRASGEGHH) the composition is skewed to basic and acidic residues. Residues Ser-45 and Ser-46 each carry the phosphoserine modification. Thr-75 carries the phosphothreonine; by CDK5 modification. Residues 89-100 (HLQSISNLNENQ) are compositionally biased toward polar residues. Residue Ser-102 is modified to Phosphoserine. The span at 109 to 118 (GELRELGYPR) shows a compositional bias: basic and acidic residues. Composition is skewed to acidic residues over residues 119-138 (EEDE…EDSQ) and 170-183 (DESE…DQVE). Ser-137 carries the post-translational modification Phosphoserine. Ser-198 bears the Phosphoserine mark.

The protein belongs to the protein phosphatase inhibitor 1 family. Post-translationally, dopamine- and cyclic AMP-regulated neuronal phosphoprotein. In terms of processing, phosphorylation of Thr-34 is required for activity.

Its subcellular location is the cytoplasm. Functionally, inhibitor of protein-phosphatase 1. The sequence is that of Protein phosphatase 1 regulatory subunit 1B (PPP1R1B) from Homo sapiens (Human).